We begin with the raw amino-acid sequence, 98 residues long: Large ribosomal subunit protein bL28 (98 aa).

The protein belongs to the bacterial ribosomal protein bL28 family.

The sequence is that of Large ribosomal subunit protein bL28 from Bartonella bacilliformis (strain ATCC 35685 / KC583 / Herrer 020/F12,63).